A 433-amino-acid chain; its full sequence is Enolase 2 (433 aa).

A disordered region spans residues 34-56; sequence RGMVPSGASTGEHEAVELRDGDK. Basic and acidic residues predominate over residues 44-56; that stretch reads GEHEAVELRDGDK. A (2R)-2-phosphoglycerate-binding site is contributed by Gln-163. Glu-205 serves as the catalytic Proton donor. 3 residues coordinate Mg(2+): Asp-243, Glu-290, and Asp-317. Residues Lys-342, Arg-371, Ser-372, and Lys-393 each coordinate (2R)-2-phosphoglycerate. Residue Lys-342 is the Proton acceptor of the active site.

This sequence belongs to the enolase family. The cofactor is Mg(2+).

It localises to the cytoplasm. The protein resides in the secreted. It is found in the cell surface. The enzyme catalyses (2R)-2-phosphoglycerate = phosphoenolpyruvate + H2O. Its pathway is carbohydrate degradation; glycolysis; pyruvate from D-glyceraldehyde 3-phosphate: step 4/5. Functionally, catalyzes the reversible conversion of 2-phosphoglycerate (2-PG) into phosphoenolpyruvate (PEP). It is essential for the degradation of carbohydrates via glycolysis. This is Enolase 2 from Lactococcus lactis subsp. cremoris (strain SK11).